The chain runs to 441 residues: Protein kinase C and casein kinase substrate in neurons protein 1 (441 aa).

A phosphoserine mark is found at Ser2 and Ser76. The F-BAR domain maps to Glu10–Asp280. Residues Lys23–Ile272 are a coiled coil. Phosphothreonine is present on Thr181. The segment at Pro297–Asp380 is disordered. Positions Ala311–Glu321 are enriched in basic and acidic residues. The span at Thr324–Thr355 shows a compositional bias: polar residues. Ser343, Ser345, Ser346, Ser358, and Ser362 each carry phosphoserine. The SH3 domain maps to Ala382–Ile441. A Phosphotyrosine modification is found at Tyr391. Ser402 and Ser427 each carry phosphoserine.

The protein belongs to the PACSIN family. As to quaternary structure, homodimer. May form heterooligomers with other PACSINs. Interacts with both COBL and DBNL. Identified in a complex composed of COBL, PACSIN1 and WASL. Interacts with EHD3. Interacts (via SH3 domain) with SYNJ1 and WASL. Interacts (via SH3 domain) with DNM1; the interaction is reduced by DNM1 phosphorylation. Interacts with DNM2 and DNM3. Interacts with MAPT. Interacts with EHD1. Interacts with TRPV4. Phosphorylated by casein kinase 2 (CK2) and protein kinase C (PKC). As to expression, highly expressed in brain. Detected in hippocampus and dorsal root ganglion neurons. Detected in rod photoreceptor terminals in the outer plexiform layer of the retina (at protein level). In CNS neurons, high levels in the pyramidal cells of the hippocampus, Purkinje cells of the cerebellum and large neurons of the cortex and brain stem.

It is found in the cytoplasm. Its subcellular location is the cell projection. It localises to the synapse. The protein localises to the synaptosome. The protein resides in the ruffle membrane. It is found in the membrane. Its subcellular location is the cytoplasmic vesicle membrane. It localises to the cytosol. The protein localises to the cell membrane. Functionally, binds to membranes via its F-BAR domain and mediates membrane tubulation. Plays a role in the reorganization of the microtubule cytoskeleton via its interaction with MAPT; this decreases microtubule stability and inhibits MAPT-induced microtubule polymerization. Plays a role in cellular transport processes by recruiting DNM1, DNM2 and DNM3 to membranes. Plays a role in the reorganization of the actin cytoskeleton and in neuron morphogenesis via its interaction with COBL and WASL, and by recruiting COBL to the cell cortex. Plays a role in the regulation of neurite formation, neurite branching and the regulation of neurite length. Required for normal synaptic vesicle endocytosis; this process retrieves previously released neurotransmitters to accommodate multiple cycles of neurotransmission. Required for normal excitatory and inhibitory synaptic transmission. The polypeptide is Protein kinase C and casein kinase substrate in neurons protein 1 (Pacsin1) (Mus musculus (Mouse)).